Here is a 153-residue protein sequence, read N- to C-terminus: MAHPLIPRIVTCAEPIAAELGLEVVDVVFQTNKKPPVLRIDVRNLSQDTGLEDCERFSRLLDPQLEAQEIIPGAYVLEVSSPGTDRNLTTDREFIAFRGFPVRVKTYAPYKDQKEWCGTLRERDEAAIHLNLKGKAIAIPRELVAKVQLDDQP.

It belongs to the RimP family.

It localises to the cytoplasm. Functionally, required for maturation of 30S ribosomal subunits. In Picosynechococcus sp. (strain ATCC 27264 / PCC 7002 / PR-6) (Agmenellum quadruplicatum), this protein is Ribosome maturation factor RimP.